The primary structure comprises 1131 residues: Probable secreted beta-glucosidase adg3 (1131 aa).

The signal sequence occupies residues 1–23 (MPSKIEKICLLLLGFTAASNVNA). N-linked (GlcNAc...) asparagine glycosylation is found at Asn58, Asn123, Asn252, Asn551, Asn593, Asn631, and Asn689. The disordered stretch occupies residues 609–819 (GTTSSTSEIV…SSPISSNSVT (211 aa)). Residues 623–715 (SNSNTGSLNG…YSDPTTTITS (93 aa)) show a composition bias toward low complexity. The span at 716–725 (EVSSILSSPT) shows a compositional bias: polar residues. Low complexity predominate over residues 726 to 737 (SMQSSVSRPQSS). Residues 738–763 (GDASGFNTIFTSISQSSDGETSGYTI) are compositionally biased toward polar residues. Composition is skewed to low complexity over residues 764 to 773 (SSNSSQNSAS) and 780 to 819 (TSSS…NSVT). 3 N-linked (GlcNAc...) asparagine glycosylation sites follow: Asn766, Asn806, and Asn857. Residues 893 to 909 (STSNSGSTSYSIPSSSS) are compositionally biased toward low complexity. A disordered region spans residues 893–918 (STSNSGSTSYSIPSSSSRNEGTTSYS). N-linked (GlcNAc...) asparagine glycosylation occurs at Asn920. Positions 977 to 1027 (LTVKPESSLSSSTTSGLTSSSSTIPSSTRSESNSESASTSSASKRSSSSTS) are enriched in low complexity. Residues 977–1031 (LTVKPESSLSSSTTSGLTSSSSTIPSSTRSESNSESASTSSASKRSSSSTSLVQS) are disordered.

This sequence belongs to the SUN family.

The protein resides in the secreted. Cell surface beta-glucosidase involved in cell wall biogenesis,. The protein is Probable secreted beta-glucosidase adg3 (adg3) of Schizosaccharomyces pombe (strain 972 / ATCC 24843) (Fission yeast).